The primary structure comprises 845 residues: Protein P (845 aa).

The segment at 1 to 179 is terminal protein domain (TP); that stretch reads MPLSYQHFRK…FCGSPYSWEQ (179 aa). Residues 180–348 are spacer; the sequence is ELHHGRLVIK…YCLSHLVNLL (169 aa). The polymerase/reverse transcriptase domain (RT) stretch occupies residues 349–692; that stretch reads EDWGPCTEHG…YMNLYPVARQ (344 aa). The region spanning 359 to 602 is the Reverse transcriptase domain; sequence EHHIRIPRTP…YSLNFMGYVI (244 aa). Residues Asp431, Asp553, and Asp554 each coordinate Mg(2+).

This sequence belongs to the hepadnaviridae P protein family.

It carries out the reaction DNA(n) + a 2'-deoxyribonucleoside 5'-triphosphate = DNA(n+1) + diphosphate. The enzyme catalyses Endonucleolytic cleavage to 5'-phosphomonoester.. Activated by host HSP70 and HSP40 in vitro to be able to bind the epsilon loop of the pgRNA. Because deletion of the RNase H region renders the protein partly chaperone-independent, the chaperones may be needed indirectly to relieve occlusion of the RNA-binding site by this domain. Inhibited by several reverse-transcriptase inhibitors: Lamivudine, Adefovir and Entecavir. In terms of biological role, multifunctional enzyme that converts the viral RNA genome into dsDNA in viral cytoplasmic capsids. This enzyme displays a DNA polymerase activity that can copy either DNA or RNA templates, and a ribonuclease H (RNase H) activity that cleaves the RNA strand of RNA-DNA heteroduplexes in a partially processive 3'- to 5'-endonucleasic mode. Neo-synthesized pregenomic RNA (pgRNA) are encapsidated together with the P protein, and reverse-transcribed inside the nucleocapsid. Initiation of reverse-transcription occurs first by binding the epsilon loop on the pgRNA genome, and is initiated by protein priming, thereby the 5'-end of (-)DNA is covalently linked to P protein. Partial (+)DNA is synthesized from the (-)DNA template and generates the relaxed circular DNA (RC-DNA) genome. After budding and infection, the RC-DNA migrates in the nucleus, and is converted into a plasmid-like covalently closed circular DNA (cccDNA). The activity of P protein does not seem to be necessary for cccDNA generation, and is presumably released from (+)DNA by host nuclear DNA repair machinery. The polypeptide is Protein P (Homo sapiens (Human)).